A 97-amino-acid polypeptide reads, in one-letter code: Co-chaperonin GroES (97 aa).

This sequence belongs to the GroES chaperonin family. In terms of assembly, heptamer of 7 subunits arranged in a ring. Interacts with the chaperonin GroEL.

It localises to the cytoplasm. Together with the chaperonin GroEL, plays an essential role in assisting protein folding. The GroEL-GroES system forms a nano-cage that allows encapsulation of the non-native substrate proteins and provides a physical environment optimized to promote and accelerate protein folding. GroES binds to the apical surface of the GroEL ring, thereby capping the opening of the GroEL channel. This chain is Co-chaperonin GroES, found in Buchnera aphidicola subsp. Baizongia pistaciae (strain Bp).